The following is a 311-amino-acid chain: Ribosomal RNA small subunit methyltransferase H (311 aa).

S-adenosyl-L-methionine contacts are provided by residues 33–35 (AGH), D53, F80, D101, and Q108.

The protein belongs to the methyltransferase superfamily. RsmH family.

It localises to the cytoplasm. It carries out the reaction cytidine(1402) in 16S rRNA + S-adenosyl-L-methionine = N(4)-methylcytidine(1402) in 16S rRNA + S-adenosyl-L-homocysteine + H(+). Its function is as follows. Specifically methylates the N4 position of cytidine in position 1402 (C1402) of 16S rRNA. In Clostridioides difficile (strain 630) (Peptoclostridium difficile), this protein is Ribosomal RNA small subunit methyltransferase H.